A 64-amino-acid chain; its full sequence is Tracheal antimicrobial peptide (64 aa).

The N-terminal stretch at 1-26 is a signal peptide; that stretch reads MRLHHLLLALLFLVLSAWSGFTQGVG. Intrachain disulfides connect Cys31/Cys60, Cys38/Cys53, and Cys43/Cys61.

Belongs to the beta-defensin family. LAP/TAP subfamily. Tracheal epithelium.

Its subcellular location is the secreted. Has antibacterial activity in vitro against Escherichia coli, Staphylococcus aureus, Klebsiella pneumonia, and Pseudomonas aeruginosa. In addition, the peptide is active against Candida albicans, indicating a broad spectrum of activity. This Bos taurus (Bovine) protein is Tracheal antimicrobial peptide.